The primary structure comprises 489 residues: Tripartite motif-containing protein 10 (489 aa).

The RING-type zinc-finger motif lies at 16–61; sequence CPICQGTLREPVTIDCGHNFCRGCLTRYCEIPGPESEESLSCPLCK. The segment at 94–135 adopts a B box-type zinc-finger fold; it reads EVEDACPEHGEKIYFFCEEDEAQLCVVCRETGQHGAHTVRFL. Zn(2+) contacts are provided by cysteine 99, histidine 102, cysteine 121, and histidine 127. Residues 144-180 are a coiled coil; the sequence is EQIQKCLVCLRKEREEIQETQSRENKRIQVLLTQVAT. The 195-residue stretch at 292–486 folds into the B30.2/SPRY domain; it reads QEMKTFLEKL…FSLSCQEGAV (195 aa).

The protein belongs to the TRIM/RBCC family. In terms of assembly, interacts with IFNAR1; this interaction prevents association of IFNAR1 with TYK2. Expressed in embryonic liver.

It localises to the cytoplasm. In terms of biological role, E3 ligase that plays an essential role in the differentiation and survival of terminal erythroid cells. May directly bind to PTEN and promote its ubiquitination, resulting in its proteasomal degradation and activation of hypertrophic signaling. In addition, plays a role in immune response regulation by repressing the phosphorylation of STAT1 and STAT2 in the interferon/JAK/STAT signaling pathway independent of its E3 ligase activity. Mechanistically, interacts with the intracellular domain of IFNAR1 and thereby inhibits the association between TYK2 and IFNAR1. The protein is Tripartite motif-containing protein 10 (Trim10) of Mus musculus (Mouse).